Reading from the N-terminus, the 1239-residue chain is Inner tegument protein (1239 aa).

Disordered regions lie at residues 1 to 20, 669 to 704, 959 to 980, and 1087 to 1239; these read MASA…DAQP, GESP…GGGP, RPPP…DTPP, and GRNA…AEDE. Positions 615 to 1239 are interaction with large tegument protein; sequence NELPKTRSLA…RPPRPTAEDE (625 aa). The segment covering 1112–1123 has biased composition (low complexity); it reads DSSPFSFSSSDF. Residues 1139–1148 are compositionally biased toward gly residues; it reads VPGGGGGGEG. Residues 1151 to 1170 show a composition bias toward basic and acidic residues; it reads EEERERPSDIDTAARARKVE. Residues 1180–1189 are compositionally biased toward low complexity; that stretch reads RTTPSPSRRA. Basic residues predominate over residues 1219–1232; the sequence is VRPRTRRGATRRPP.

The protein belongs to the herpesviridae inner tegument protein family. Interacts (via C-terminus) with the large tegument protein/LTP (via N-terminus).

The protein localises to the virion tegument. Its subcellular location is the host cytoplasm. It is found in the host nucleus. It localises to the host Golgi apparatus. The protein resides in the host trans-Golgi network. Plays an essential role in cytoplasmic secondary envelopment during viral egress. Interacts with the capsid via the large tegument protein/LTP and participates in its transport to the host trans-Golgi network (TGN) where secondary envelopment occurs. Modulates tegumentation and capsid accumulation at the viral assembly complex. This Homo sapiens (Human) protein is Inner tegument protein.